A 334-amino-acid polypeptide reads, in one-letter code: Glycerol-3-phosphate dehydrogenase [NAD(P)+] (334 aa).

NADPH is bound by residues Trp-13, Arg-33, and Lys-106. Sn-glycerol 3-phosphate contacts are provided by Lys-106, Gly-137, and Ser-139. Ala-141 lines the NADPH pocket. Sn-glycerol 3-phosphate-binding residues include Lys-192, Asp-245, Ser-255, Arg-256, and Asn-257. The active-site Proton acceptor is the Lys-192. Arg-256 is an NADPH binding site. 2 residues coordinate NADPH: Val-280 and Glu-282.

The protein belongs to the NAD-dependent glycerol-3-phosphate dehydrogenase family.

Its subcellular location is the cytoplasm. It catalyses the reaction sn-glycerol 3-phosphate + NAD(+) = dihydroxyacetone phosphate + NADH + H(+). It carries out the reaction sn-glycerol 3-phosphate + NADP(+) = dihydroxyacetone phosphate + NADPH + H(+). The protein operates within membrane lipid metabolism; glycerophospholipid metabolism. Its function is as follows. Catalyzes the reduction of the glycolytic intermediate dihydroxyacetone phosphate (DHAP) to sn-glycerol 3-phosphate (G3P), the key precursor for phospholipid synthesis. This is Glycerol-3-phosphate dehydrogenase [NAD(P)+] from Chlamydia trachomatis serovar A (strain ATCC VR-571B / DSM 19440 / HAR-13).